Consider the following 298-residue polypeptide: 4-hydroxy-tetrahydrodipicolinate synthase (298 aa).

Threonine 45 is a binding site for pyruvate. Tyrosine 133 functions as the Proton donor/acceptor in the catalytic mechanism. The Schiff-base intermediate with substrate role is filled by lysine 161. Pyruvate is bound at residue isoleucine 203.

The protein belongs to the DapA family. In terms of assembly, homotetramer; dimer of dimers.

The protein localises to the cytoplasm. The catalysed reaction is L-aspartate 4-semialdehyde + pyruvate = (2S,4S)-4-hydroxy-2,3,4,5-tetrahydrodipicolinate + H2O + H(+). It functions in the pathway amino-acid biosynthesis; L-lysine biosynthesis via DAP pathway; (S)-tetrahydrodipicolinate from L-aspartate: step 3/4. Functionally, catalyzes the condensation of (S)-aspartate-beta-semialdehyde [(S)-ASA] and pyruvate to 4-hydroxy-tetrahydrodipicolinate (HTPA). The protein is 4-hydroxy-tetrahydrodipicolinate synthase of Wigglesworthia glossinidia brevipalpis.